The primary structure comprises 124 residues: Fluoride-specific ion channel FluC (124 aa).

The next 4 helical transmembrane spans lie at 4–24, 35–55, 63–83, and 96–116; these read IFYI…TTLV, YATF…FGYL, PYLK…FSAF, and ILIA…ATWT. Residues glycine 75 and threonine 78 each contribute to the Na(+) site.

It belongs to the fluoride channel Fluc/FEX (TC 1.A.43) family.

Its subcellular location is the cell inner membrane. The enzyme catalyses fluoride(in) = fluoride(out). Its activity is regulated as follows. Na(+) is not transported, but it plays an essential structural role and its presence is essential for fluoride channel function. In terms of biological role, fluoride-specific ion channel. Important for reducing fluoride concentration in the cell, thus reducing its toxicity. In Flavobacterium psychrophilum (strain ATCC 49511 / DSM 21280 / CIP 103535 / JIP02/86), this protein is Fluoride-specific ion channel FluC.